Consider the following 654-residue polypeptide: Acetyl-coenzyme A synthetase (654 aa).

Residues 196–199 (RGGK) and T316 contribute to the CoA site. ATP-binding positions include 392 to 394 (GEP), 416 to 421 (DTWWQT), D506, and R521. S529 serves as a coordination point for CoA. R532 serves as a coordination point for ATP. Positions 543 and 548 each coordinate Mg(2+). K618 is modified (N6-acetyllysine).

This sequence belongs to the ATP-dependent AMP-binding enzyme family. Requires Mg(2+) as cofactor. Post-translationally, acetylated. Deacetylation by the SIR2-homolog deacetylase activates the enzyme.

It carries out the reaction acetate + ATP + CoA = acetyl-CoA + AMP + diphosphate. Its function is as follows. Catalyzes the conversion of acetate into acetyl-CoA (AcCoA), an essential intermediate at the junction of anabolic and catabolic pathways. AcsA undergoes a two-step reaction. In the first half reaction, AcsA combines acetate with ATP to form acetyl-adenylate (AcAMP) intermediate. In the second half reaction, it can then transfer the acetyl group from AcAMP to the sulfhydryl group of CoA, forming the product AcCoA. This is Acetyl-coenzyme A synthetase from Methylobacillus flagellatus (strain ATCC 51484 / DSM 6875 / VKM B-1610 / KT).